Consider the following 398-residue polypeptide: O-methyltransferase penC (398 aa).

An S-adenosyl-L-methionine-binding site is contributed by D263. The Proton acceptor role is filled by H305.

This sequence belongs to the class I-like SAM-binding methyltransferase superfamily. Cation-independent O-methyltransferase family.

It functions in the pathway secondary metabolite biosynthesis. Its pathway is alkaloid biosynthesis. The protein operates within mycotoxin biosynthesis. O-methyltransferase; part of the gene cluster that mediates the biosynthesis of penigequinolones, potent insecticidal alkaloids that contain a highly modified 10-carbon prenyl group. The first stage is catalyzed by the nonribosomal peptide synthetase penN that condenses anthranilic acid and O-methyl-L-tyrosine to produce 4'-methoxycyclopeptin. 4'-methoxycyclopeptin is then converted to 4'-methoxydehydrocyclopeptin by the ketoglutarate-dependent dioxygenase penM through dehydrogenation to form a double bond between C-alpha and C-beta of the O-methyltyrosine side chain. PenM also converts its first product methoxydehydrocyclopeptin to 4'-methoxycyclopenin. The following conversion of 4'methoxycyclopenin into 4'-methoxyviridicatin is catalyzed by the cyclopenase penL. 4'-methoxyviridicatin is the precursor of quinolone natural products, and is further converted to quinolinone B. The prenyltransferase penI then catalyzes the canonical Friedel-Crafts alkylation of quinolinone B with dimethylallyl cation to yield dimethylallyl quinolone, which is subjected to FAD-dependent dehydrogenation by the FAD-linked oxidoreductase penH to yield conjugated aryl diene. The delta(3') double bond then serves as the site of the second alkylation with DMAPP catalyzed by the prenyltransferase penG to yield a carbenium ion intermediate, which can be attacked by H(2)O to yield a styrenyl quinolone containing a C3'-hydroxyprenyl chain, or undergo cyclization to yield yaequinolones J1 and J2. The conversion of the styrenyl quinolone into the tetrahydrofuran-containing yaequinolone C is performed by the FAD-dependent monooxygenase penE and involves epoxidation of the terminal C7'-C8' olefin, followed by epoxide ring opening initiated by the C3' hydroxyl group. The predicted cysteine hydrolase penJ acts as an epoxide hydrolase that enhances the rate of the 5-exo-tet cyclization step, increasing the yield of yaequinolone C. PenF catalyzes the cationic rearrangement of the epoxide formed by penE (before ring opening to produce yaequinolone C) into yaequinolone D. Finally, the short-chain dehydrogenase/reductase (SDR)-like reductase penD, catalyzes both the dehydration of yaequinolone D and the reduction of the resulting oxonium to yield penigequinolone. This chain is O-methyltransferase penC, found in Penicillium thymicola.